The chain runs to 93 residues: Small ribosomal subunit protein uS19 (93 aa).

It belongs to the universal ribosomal protein uS19 family.

Its function is as follows. Protein S19 forms a complex with S13 that binds strongly to the 16S ribosomal RNA. The chain is Small ribosomal subunit protein uS19 from Frankia casuarinae (strain DSM 45818 / CECT 9043 / HFP020203 / CcI3).